Reading from the N-terminus, the 326-residue chain is Apoptosis facilitator Bcl-2-like protein 14 (326 aa).

Residue S44 is modified to Phosphoserine. Residues 99 to 127 are disordered; the sequence is TEKEEEPPSSPKEIHAQGPFPVERQGRNQ. A BH3 motif is present at residues 211-225; it reads IVELLKYSGDQLGRE. The BH2 motif lies at 307–314; sequence WVQQNGGW.

The protein belongs to the Bcl-2 family. Post-translationally, phosphorylated by MELK, leading to inhibit its pro-apoptotic function.

It localises to the cytoplasm. In terms of biological role, plays a role in apoptosis. The polypeptide is Apoptosis facilitator Bcl-2-like protein 14 (Bcl2l14) (Rattus norvegicus (Rat)).